Consider the following 104-residue polypeptide: MAIVKVTDADFDSKVESGVQLVDFWATWCGPCKMIAPVLEELAADYEGKADILKLDVDENPSTAAKYEVMSIPTLIVFKDGQPVDKVVGFQPKENLAEVLDKHL.

The 103-residue stretch at 2-104 folds into the Thioredoxin domain; that stretch reads AIVKVTDADF…NLAEVLDKHL (103 aa). Cysteines 29 and 32 form a disulfide.

The protein belongs to the thioredoxin family.

Functionally, component of the thioredoxin-thioredoxin reductase system. Participates in various redox reactions through the reversible oxidation of its active center dithiol to a disulfide and catalyzes dithiol-disulfide exchange reactions. The chain is Thioredoxin (trxA) from Staphylococcus aureus (strain N315).